The sequence spans 319 residues: MPRREMMKCLFVSESCVCHTDLAIKDGVLPFPLPAVLGHEGSGIVEAVGPGVKHLKPGDAVVMTFASCGHCASCEHERPSYCLDFGAQNYSAQRADGPVLLSQGDEVISGFFFGQSSFSSMAMAREHNLVKIDALVDDAPIELLGPLGCGVQTGAGAVMISLDVRAGRSFLVLGGGAVGLSAVMAAKLRGCSRIIVSEPSAAKREQALALGATEVIDPLNENLVERVQQITEGQGCDYALECTGLVSVMEQAIDSMAMRGQLAVVGVPPKLDATAAVSPLALIQKGLKLMGVIEGDSCRVYSSTSCTRSSRLGVFRSPR.

The Zn(2+) site is built by cysteine 18, histidine 39, cysteine 68, cysteine 71, cysteine 74, cysteine 82, and cysteine 149.

This sequence belongs to the zinc-containing alcohol dehydrogenase family. It depends on Zn(2+) as a cofactor.

It carries out the reaction a primary alcohol + NAD(+) = an aldehyde + NADH + H(+). It catalyses the reaction a secondary alcohol + NAD(+) = a ketone + NADH + H(+). The polypeptide is Probable alcohol dehydrogenase (terPD) (Pseudomonas sp).